Consider the following 262-residue polypeptide: Abhydrolase domain-containing protein ACTT2-2 (262 aa).

A Peroxisomal targeting signal type 1 motif is present at residues S260–L262.

Belongs to the AB hydrolase superfamily. AKT2 hydrolase family.

It is found in the peroxisome. It functions in the pathway mycotoxin biosynthesis. Functionally, abhydrolase domain-containing protein; part of the gene clusters that mediate the biosynthesis of the host-selective toxins (HSTs) ACT-toxins responsible for brown spot of tangerine disease by the tangerine pathotype which affects tangerines and mandarins. ACT-toxins consist of three moieties, 9,10-epoxy-8-hydroxy-9-methyl-decatrienoic acid (EDA), valine and a polyketide. ACT-toxin I is toxic to both citrus and pear; toxin II the 5''-deoxy derivative of ACT-toxin I, is highly toxic to pear and slightly toxic to citrus. On cellular level, ACT-toxins affect plasma membrane of susceptible cells and cause a sudden increase in loss of K(+) after a few minutes of toxin treatment. The acyl-CoA ligase ACTT1, the hydrolase ACTT2, the enoyl-CoA hydratases ACTT3 and ACTT6, and the acyl-CoA synthetase ACTT5 are all involved in the biosynthesis of the AK-, AF- and ACT-toxin common 9,10-epoxy-8-hydroxy-9-methyl-decatrienoic acid (EDA) structural moiety. The exact role of each enzyme, and of additional enzymes identified within the AF-toxin clusters have still to be determined. On the other hand, ACTTS1 to ACTTS4 are specific to the tangerine pathotype. The function of ACTTS3 is to elongate the polyketide chain portion of ACT-toxin that is unique to this toxin. The enoyl-reductase ACTTS2 might complement the missing enoyl-reductase (ER) domain in ACTTS3 in the synthesis of the polyketide portion of ACT-toxin. The roles of the nonribosomal peptide synthetases-related proteins ACTTS1 and ACTTS4 have also still not been elucidated. This chain is Abhydrolase domain-containing protein ACTT2-2 (ACTT2-2), found in Alternaria alternata (Alternaria rot fungus).